Consider the following 145-residue polypeptide: MRADREELDLPPPIGGVAIDVVKVEVPATGRTLVLAFVKTCAVLAAVHGLYILHEVDLTTAHKEAEWEFEPLAWRVWLVVFYFGCLSLTVWLLEGSYGGSDHHAARAQSPDVRARRSELDDNIAQMGAVHGLELPRRQVLRRRGT.

The protein belongs to the adenoviridae leader protein family.

It is found in the host cytoplasm. Its subcellular location is the host perinuclear region. This Human adenovirus C serotype 5 (HAdV-5) protein is I-leader protein.